We begin with the raw amino-acid sequence, 1157 residues long: DNA-directed RNA polymerase subunit beta (1157 aa).

It belongs to the RNA polymerase beta chain family. In terms of assembly, the RNAP catalytic core consists of 2 alpha, 1 beta, 1 beta' and 1 omega subunit. When a sigma factor is associated with the core the holoenzyme is formed, which can initiate transcription.

It carries out the reaction RNA(n) + a ribonucleoside 5'-triphosphate = RNA(n+1) + diphosphate. DNA-dependent RNA polymerase catalyzes the transcription of DNA into RNA using the four ribonucleoside triphosphates as substrates. This is DNA-directed RNA polymerase subunit beta from Tropheryma whipplei (Whipple's bacillus).